Consider the following 208-residue polypeptide: 3-isopropylmalate dehydratase small subunit (208 aa).

This sequence belongs to the LeuD family. LeuD type 1 subfamily. In terms of assembly, heterodimer of LeuC and LeuD.

The catalysed reaction is (2R,3S)-3-isopropylmalate = (2S)-2-isopropylmalate. It participates in amino-acid biosynthesis; L-leucine biosynthesis; L-leucine from 3-methyl-2-oxobutanoate: step 2/4. Functionally, catalyzes the isomerization between 2-isopropylmalate and 3-isopropylmalate, via the formation of 2-isopropylmaleate. This chain is 3-isopropylmalate dehydratase small subunit (leuD), found in Cupriavidus necator (Alcaligenes eutrophus).